Consider the following 377-residue polypeptide: Glutamate 5-kinase (377 aa).

Lysine 20 is a binding site for ATP. Substrate contacts are provided by serine 60, aspartate 147, and asparagine 159. 179 to 180 provides a ligand contact to ATP; the sequence is SD. The PUA domain maps to 281–355; the sequence is HGQLHLDAGA…GQSTSDLPEF (75 aa).

It belongs to the glutamate 5-kinase family.

The protein resides in the cytoplasm. It catalyses the reaction L-glutamate + ATP = L-glutamyl 5-phosphate + ADP. The protein operates within amino-acid biosynthesis; L-proline biosynthesis; L-glutamate 5-semialdehyde from L-glutamate: step 1/2. In terms of biological role, catalyzes the transfer of a phosphate group to glutamate to form L-glutamate 5-phosphate. The protein is Glutamate 5-kinase of Corynebacterium jeikeium (strain K411).